The primary structure comprises 450 residues: Probable glycine dehydrogenase (decarboxylating) subunit 1 (450 aa).

The protein belongs to the GcvP family. N-terminal subunit subfamily. In terms of assembly, the glycine cleavage system is composed of four proteins: P, T, L and H. In this organism, the P 'protein' is a heterodimer of two subunits.

It catalyses the reaction N(6)-[(R)-lipoyl]-L-lysyl-[glycine-cleavage complex H protein] + glycine + H(+) = N(6)-[(R)-S(8)-aminomethyldihydrolipoyl]-L-lysyl-[glycine-cleavage complex H protein] + CO2. The glycine cleavage system catalyzes the degradation of glycine. The P protein binds the alpha-amino group of glycine through its pyridoxal phosphate cofactor; CO(2) is released and the remaining methylamine moiety is then transferred to the lipoamide cofactor of the H protein. The chain is Probable glycine dehydrogenase (decarboxylating) subunit 1 from Brevibacillus brevis (strain 47 / JCM 6285 / NBRC 100599).